Here is a 92-residue protein sequence, read N- to C-terminus: Cell division topological specificity factor (92 aa).

It belongs to the MinE family.

Its function is as follows. Prevents the cell division inhibition by proteins MinC and MinD at internal division sites while permitting inhibition at polar sites. This ensures cell division at the proper site by restricting the formation of a division septum at the midpoint of the long axis of the cell. The polypeptide is Cell division topological specificity factor (Symbiobacterium thermophilum (strain DSM 24528 / JCM 14929 / IAM 14863 / T)).